The following is a 513-amino-acid chain: Interferon alpha/beta receptor 2 (513 aa).

The N-terminal stretch at 1-21 (MRSRCTVSAVGLLSLCLVVSA) is a signal peptide. Over 22–242 (SLETITPSAF…GQESGLSESA (221 aa)) the chain is Extracellular. 2 disulfides stabilise this stretch: Cys-39/Cys-123 and Cys-85/Cys-93. Asn-42, Asn-58, Asn-65, Asn-78, and Asn-84 each carry an N-linked (GlcNAc...) asparagine glycan. 3 N-linked (GlcNAc...) asparagine glycosylation sites follow: Asn-149, Asn-191, and Asn-195. Cys-210 and Cys-227 form a disulfide bridge. Residues 243–263 (IVGITTSCLVVMVFVSTIVML) traverse the membrane as a helical segment. The Cytoplasmic segment spans residues 264–513 (KRIGYICLKD…ADVGDGYIMR (250 aa)). Positions 334-402 (GYTMHGLTGK…DPTGPYERRK (69 aa)) are disordered. At Tyr-335 the chain carries Phosphotyrosine. Polar residues predominate over residues 344-354 (PLQQTSDTSAS). Positions 377-389 (GAEPELPTEAGAG) are enriched in low complexity. Ser-403 is modified (phosphoserine). The interval 421–444 (GDNIIFNVNLNSVFLRVLHDEDAS) is mediates interaction with STAT2 (and required for the recruitment of USP18). Residues Ser-448 and Ser-465 each carry the phosphoserine modification. The interval 458–513 (EGPQRTESDLRIAGGDRTQPPLPSLPSQDLWTEDGSSEKSDTSDSDADVGDGYIMR) is disordered. At Tyr-510 the chain carries Phosphotyrosine.

This sequence belongs to the type II cytokine receptor family. As to quaternary structure, heterodimer with IFNAR1; forming the receptor for type I interferon. Interacts with the transcriptional factors STAT1 and STAT2. Interacts with JAK1. Interacts with USP18; indirectly via STAT2, it negatively regulates the assembly of the ternary interferon-IFNAR1-IFNAR2 complex and therefore type I interferon signaling. Phosphorylated on tyrosine residues upon interferon binding. Phosphorylation at Tyr-335 or Tyr-510 are sufficient to mediate interferon dependent activation of STAT1, STAT2 and STAT3 leading to antiproliferative effects on many different cell types. As to expression, widely expressed. Detected in liver, testis, kidney, salivary gland, thymus, brain, lung and placenta. Isoform 1, isoform 2 and isoform 3 are expressed in brain.

Its subcellular location is the cell membrane. The protein resides in the secreted. Its function is as follows. Together with IFNAR1, forms the heterodimeric receptor for type I interferons (including interferons alpha, beta, epsilon, omega and kappa). Type I interferon binding activates the JAK-STAT signaling cascade, resulting in transcriptional activation or repression of interferon-regulated genes that encode the effectors of the interferon response. Mechanistically, type I interferon-binding brings the IFNAR1 and IFNAR2 subunits into close proximity with one another, driving their associated Janus kinases (JAKs) (TYK2 bound to IFNAR1 and JAK1 bound to IFNAR2) to cross-phosphorylate one another. The activated kinases phosphorylate specific tyrosine residues on the intracellular domains of IFNAR1 and IFNAR2, forming docking sites for the STAT transcription factors (STAT1, STAT2 and STAT). STAT proteins are then phosphorylated by the JAKs, promoting their translocation into the nucleus to regulate expression of interferon-regulated genes. Functionally, may be potent inhibitors of type I IFN receptor activity. The chain is Interferon alpha/beta receptor 2 (Ifnar2) from Mus musculus (Mouse).